The chain runs to 319 residues: 12-(S)-hydroxy-5,8,10,14-eicosatetraenoic acid receptor (319 aa).

Residues 1–16 (MPFPNCSAPSTVVATA) lie on the Extracellular side of the membrane. The N-linked (GlcNAc...) asparagine glycan is linked to asparagine 5. A helical membrane pass occupies residues 17–37 (VGVLLGLECGLGLLGNAVALW). Topologically, residues 38-52 (TFLFRVRVWKPYAVY) are cytoplasmic. A helical membrane pass occupies residues 53-73 (LLNLALADLLLAACLPFLAAF). Over 74–91 (YLSLQAWHLGRVGCWALH) the chain is Extracellular. Residues 92–110 (FLLDLSRSVGMAFLAAVAL) form a helical membrane-spanning segment. Topologically, residues 111–131 (DRYLRVVHPRLKVNLLSPQAA) are cytoplasmic. A helical membrane pass occupies residues 132–152 (LGVSGLVWLLMVALTCPGLLI). Residues 153-180 (SEAAQNSTRCHSFYSRADGSFSIIWQEA) are Extracellular-facing. The helical transmembrane segment at 181 to 201 (LSCLQFVLPFGLIVFCNAGII) threads the bilayer. At 202–219 (RALQKRLREPEKQPKLQR) the chain is on the cytoplasmic side. A helical membrane pass occupies residues 220 to 240 (AQALVTLVVVLFALCFLPCFL). At 241-265 (ARVLMHIFQNLGSCRALCAVAHTSD) the chain is on the extracellular side. A helical membrane pass occupies residues 266-284 (VTGSLTYLHSVLNPVVYCF). Topologically, residues 285 to 319 (SSPTFRSSYRRVFHTLRGKGQAAEPPDFNPRDSYS) are cytoplasmic.

This sequence belongs to the G-protein coupled receptor 1 family. Interacts with KRAS; in a farnesylation-dependent manner.

It is found in the cell membrane. In terms of biological role, high-affinity receptor for 12-(S)-hydroxy-5,8,10,14-eicosatetraenoic acid (12-S-HETE), with much lower affinities for other HETE isomers. 12-S-HETE is a eicosanoid, a 12-lipoxygenase (ALOX12) metabolite of arachidonic acid, involved in many physiologic and pathologic processes. 12-S-HETE-binding leads to activation of ERK1/2 (MAPK3/MAPK1), MEK, and NF-kappa-B pathways leading to cell growth. Plays a crucial role for proliferation, survival and macropinocytosis of KRAS-dependent cancer cells by mediating the translocation of KRAS from the endoplasmic reticulum to the plasma membrane (PM) and its association with the PM. Contributes to enhanced immune responses by inducing dendrite protrusion of small intestinal CX3CR1(+) phagocytes for the uptake of luminal antigens. Acts also as a key receptor for 12-(S)-HETE-mediated liver ischemia reperfusion injury. Its function is as follows. Proton-sensing G protein-coupled receptor. The sequence is that of 12-(S)-hydroxy-5,8,10,14-eicosatetraenoic acid receptor (GPR31) from Homo sapiens (Human).